Here is a 737-residue protein sequence, read N- to C-terminus: DNA mismatch repair protein MLH1 (737 aa).

Disordered stretches follow at residues 1–21 (MIDD…ATTI) and 378–416 (TLTS…PAGR). Polar residues predominate over residues 378–400 (TLTSQKSDSPVSQKPSGQKTQKV).

Belongs to the DNA mismatch repair MutL/HexB family. In terms of assembly, heterodimer of MLH1 and PMS1, called MutLalpha, which is the major MMR MutL activity correcting base-base mismatches as well as IDLs. The heterodimer binds double strand DNA independently of a mismatch with positive cooperativity and has more than one DNA binding site. Heterodimer of MLH1 and MLH3, called MutLbeta, which is involved in correction of a specific subset of IDLs when associated with MutSbeta. In terms of tissue distribution, ubiquitous.

It localises to the nucleus. Functionally, involved in DNA mismatch repair (MMR), correcting insertion-deletion loops (IDLs) resulting from DNA replication, DNA damage or from recombination events between non-identical sequences during meiosis. Component of the MutLbeta heterodimer, which probably forms a ternary complex with the MutSbeta heterodimer that initially recognizes the DNA mismatches. This complex is thought to be responsible for directing the downstream MMR events, including strand discrimination, excision, and resynthesis. Plays a major role in promoting meiotic crossing-over and is involved in maintaining the genetic stability of simple sequence repeats by correction of frameshift intermediates. In Arabidopsis thaliana (Mouse-ear cress), this protein is DNA mismatch repair protein MLH1 (MLH1).